The following is a 194-amino-acid chain: Holliday junction branch migration complex subunit RuvA (194 aa).

The interval Met-1–Leu-64 is domain I. The domain II stretch occupies residues Arg-65 to Pro-140. Residues Pro-140–Gln-144 are flexible linker. The segment at Leu-145 to Arg-194 is domain III.

It belongs to the RuvA family. As to quaternary structure, homotetramer. Forms an RuvA(8)-RuvB(12)-Holliday junction (HJ) complex. HJ DNA is sandwiched between 2 RuvA tetramers; dsDNA enters through RuvA and exits via RuvB. An RuvB hexamer assembles on each DNA strand where it exits the tetramer. Each RuvB hexamer is contacted by two RuvA subunits (via domain III) on 2 adjacent RuvB subunits; this complex drives branch migration. In the full resolvosome a probable DNA-RuvA(4)-RuvB(12)-RuvC(2) complex forms which resolves the HJ.

It is found in the cytoplasm. Functionally, the RuvA-RuvB-RuvC complex processes Holliday junction (HJ) DNA during genetic recombination and DNA repair, while the RuvA-RuvB complex plays an important role in the rescue of blocked DNA replication forks via replication fork reversal (RFR). RuvA specifically binds to HJ cruciform DNA, conferring on it an open structure. The RuvB hexamer acts as an ATP-dependent pump, pulling dsDNA into and through the RuvAB complex. HJ branch migration allows RuvC to scan DNA until it finds its consensus sequence, where it cleaves and resolves the cruciform DNA. The chain is Holliday junction branch migration complex subunit RuvA from Xanthomonas oryzae pv. oryzae (strain MAFF 311018).